The sequence spans 136 residues: Large ribosomal subunit protein uL16 (136 aa).

Belongs to the universal ribosomal protein uL16 family. Part of the 50S ribosomal subunit.

Functionally, binds 23S rRNA and is also seen to make contacts with the A and possibly P site tRNAs. The chain is Large ribosomal subunit protein uL16 from Orientia tsutsugamushi (strain Boryong) (Rickettsia tsutsugamushi).